The following is a 700-amino-acid chain: Stonustoxin subunit beta (700 aa).

The tract at residues 2 to 264 (PSDILVVAAL…EAPQLMADSS (263 aa)) is structural MACPF/CDC pore-forming domain. The tract at residues 265 to 384 (TPILRKVRNT…DILTKAKPKV (120 aa)) is structural FAT domain. The segment at 385–514 (IFNQGVLFKG…PYMPGVESIK (130 aa)) is thioredoxin (THX) domain. Positions 506–700 (YMPGVESIKD…QKVNGQIKLL (195 aa)) constitute a B30.2/SPRY domain.

The protein belongs to the SNTX/VTX toxin family. In terms of assembly, heterodimer of alpha and beta subunits; non-covalently linked. Intrachain disulfide bonds may be present in the heterodimer. Post-translationally, not glycosylated. In terms of tissue distribution, expressed by the venom gland.

It localises to the secreted. In terms of biological role, this lethal (towards mammals) heterodimer induces hemolytic activities due to its ability to form pores in the cell membrane. The pore may be composed of 10 SNTX-alpha/beta heterodimers. The toxin elicits potent hypotension which is endothelium-dependent and appears to be mediated by the nitric oxide pathway and activation of potassium channels. In addition, it displays edema-inducing activities, increases vascular permeability. It also shows myotoxic activities and interferes irreversibly with neuromuscular function. It also induces irreversible platelet aggregation in rabbit or rat but not in human or mouse whole blood. In addition, it has been observed to increase spontaneous quantal acetylcholine release from isolated frog cutaneous pectoris motor endings. This Synanceia horrida (Estuarine stonefish) protein is Stonustoxin subunit beta.